The primary structure comprises 319 residues: ATP-dependent 6-phosphofructokinase (319 aa).

Residue glycine 11 participates in ATP binding. ADP is bound at residue 21–25 (RAVVR). Residues 72-73 (RC) and 102-105 (GDGS) contribute to the ATP site. Aspartate 103 provides a ligand contact to Mg(2+). Residue 125-127 (TID) participates in substrate binding. The active-site Proton acceptor is aspartate 127. Arginine 154 lines the ADP pocket. Residues arginine 162 and 169 to 171 (MGR) each bind substrate. ADP is bound by residues 185 to 187 (GAE), arginine 211, and 213 to 215 (KKH). Residues glutamate 222, arginine 243, and 249–252 (HIQR) each bind substrate.

The protein belongs to the phosphofructokinase type A (PFKA) family. ATP-dependent PFK group I subfamily. Prokaryotic clade 'B1' sub-subfamily. As to quaternary structure, homotetramer. Mg(2+) serves as cofactor.

It localises to the cytoplasm. It catalyses the reaction beta-D-fructose 6-phosphate + ATP = beta-D-fructose 1,6-bisphosphate + ADP + H(+). It participates in carbohydrate degradation; glycolysis; D-glyceraldehyde 3-phosphate and glycerone phosphate from D-glucose: step 3/4. Allosterically activated by ADP and other diphosphonucleosides, and allosterically inhibited by phosphoenolpyruvate. Catalyzes the phosphorylation of D-fructose 6-phosphate to fructose 1,6-bisphosphate by ATP, the first committing step of glycolysis. The polypeptide is ATP-dependent 6-phosphofructokinase (Bacillus velezensis (strain DSM 23117 / BGSC 10A6 / LMG 26770 / FZB42) (Bacillus amyloliquefaciens subsp. plantarum)).